The chain runs to 211 residues: Phosphatidylglycerophosphatase C (211 aa).

The Cytoplasmic segment spans residues 1–33 (MATHERRVVFFDLDGTLHQQDMFGSFLRYLLRR). Residues 34–54 (QPLNALLVLPLLPIIAIALLI) form a helical membrane-spanning segment. The Periplasmic portion of the chain corresponds to 55-211 (KGRAARWPMS…TPRGELQQLE (157 aa)).

Mg(2+) serves as cofactor.

Its subcellular location is the cell inner membrane. It carries out the reaction a 1,2-diacyl-sn-glycero-3-phospho-(1'-sn-glycero-3'-phosphate) + H2O = a 1,2-diacyl-sn-glycero-3-phospho-(1'-sn-glycerol) + phosphate. It participates in phospholipid metabolism; phosphatidylglycerol biosynthesis; phosphatidylglycerol from CDP-diacylglycerol: step 2/2. In terms of biological role, lipid phosphatase which dephosphorylates phosphatidylglycerophosphate (PGP) to phosphatidylglycerol (PG). The polypeptide is Phosphatidylglycerophosphatase C (pgpC) (Escherichia coli (strain K12)).